Reading from the N-terminus, the 152-residue chain is uncharacterized protein (152 aa).

5 helical membrane-spanning segments follow: residues 2–22, 33–53, 58–78, 97–117, and 122–142; these read GVVFAFGFYLIFIKLTGLKLM, LKMIFSILSVILAFLINWLIM, FLIEIIHPIASVWIFIILIYL, FMGNMSAIAIFLELLKIIEYV, and IASPITVALVFFIPVVVFFNC.

Its subcellular location is the cell membrane. This is an uncharacterized protein from Methanocaldococcus jannaschii (strain ATCC 43067 / DSM 2661 / JAL-1 / JCM 10045 / NBRC 100440) (Methanococcus jannaschii).